The sequence spans 162 residues: Probable ergosterol biosynthetic protein 28 homolog (162 aa).

A run of 4 helical transmembrane segments spans residues 7 to 25, 40 to 60, 69 to 89, and 96 to 116; these read AWMS…MCYA, LSRA…VLIF, IAHI…VFFY, and IVTV…LTFL.

This sequence belongs to the ERG28 family. In terms of tissue distribution, expressed in tissues including muscles, intestine and neurons.

Its subcellular location is the endoplasmic reticulum membrane. It localises to the cell projection. It is found in the dendrite. In terms of biological role, promotes the translocation of slo-1 potassium ion channels from the endoplasmic reticulum to its final destination at the plasma membrane, probably by shielding from premature proteasomal degradation in the endoplasmic reticulum. Maintains the levels of slo-1 potassium ion channel at the presynaptic neurons. The protein is Probable ergosterol biosynthetic protein 28 homolog of Caenorhabditis elegans.